Consider the following 606-residue polypeptide: Chaperone protein DnaK (606 aa).

Thr-174 carries the post-translational modification Phosphothreonine; by autocatalysis. Positions Gln-576–Lys-606 are disordered. The segment covering Ala-597–Lys-606 has biased composition (basic and acidic residues).

Belongs to the heat shock protein 70 family.

In terms of biological role, acts as a chaperone. The protein is Chaperone protein DnaK of Caldanaerobacter subterraneus subsp. tengcongensis (strain DSM 15242 / JCM 11007 / NBRC 100824 / MB4) (Thermoanaerobacter tengcongensis).